The following is an 82-amino-acid chain: Small ribosomal subunit protein bS16 (82 aa).

This sequence belongs to the bacterial ribosomal protein bS16 family.

The sequence is that of Small ribosomal subunit protein bS16 from Vibrio parahaemolyticus serotype O3:K6 (strain RIMD 2210633).